The primary structure comprises 30 residues: Alpha-defensin PhD-4 (30 aa).

Cystine bridges form between Cys-2/Cys-30, Cys-4/Cys-19, and Cys-9/Cys-29.

Its subcellular location is the secreted. Its function is as follows. In low salt conditions, has antibacterial activity against the Gram-negative bacterium E.coli ML35p (MIC=2.4 uM), the Gram-positive bacteria L.monocytogenes EGD (MIC=2.2 uM) and methicillin-resistant S.aureus ATCC 33591 (MIC=3.5 uM), and the fungus C.albicans 820 (MIC=3.9 uM). At high physiological salt concentrations the antimicrobial activity decreases significantly: E.coli ML35p (MIC=7.1 uM), L.monocytogenes EGD (MIC=1.8 uM), S.aureus ATCC 33591 (MIC=&gt;50 uM), and C.albicans 820 (MIC=&gt;50 uM). This chain is Alpha-defensin PhD-4, found in Papio hamadryas (Hamadryas baboon).